A 610-amino-acid chain; its full sequence is UvrABC system protein C (610 aa).

The 79-residue stretch at 16–94 (SQPGVYSMYD…IKLYQPRYNV (79 aa)) folds into the GIY-YIG domain. Positions 204 to 239 (QQVLNQLVERMELASRALNFEDAAHARDQIQAVRRV) constitute a UVR domain.

Belongs to the UvrC family. In terms of assembly, interacts with UvrB in an incision complex.

It localises to the cytoplasm. Functionally, the UvrABC repair system catalyzes the recognition and processing of DNA lesions. UvrC both incises the 5' and 3' sides of the lesion. The N-terminal half is responsible for the 3' incision and the C-terminal half is responsible for the 5' incision. In Sodalis glossinidius (strain morsitans), this protein is UvrABC system protein C.